The following is a 280-amino-acid chain: F-actin-capping protein subunit alpha (280 aa).

This sequence belongs to the F-actin-capping protein alpha subunit family. As to quaternary structure, heterodimer of an alpha and a beta subunit.

The protein resides in the cytoplasm. It is found in the cytoskeleton. Functionally, F-actin-capping proteins bind in a Ca(2+)-independent manner to the fast growing ends of actin filaments (barbed end) thereby blocking the exchange of subunits at these ends. Unlike other capping proteins (such as gelsolin and severin), these proteins do not sever actin filaments. The polypeptide is F-actin-capping protein subunit alpha (CAP01) (Candida albicans (strain SC5314 / ATCC MYA-2876) (Yeast)).